Consider the following 432-residue polypeptide: Ribosomal protein uS12 methylthiotransferase RimO (432 aa).

One can recognise an MTTase N-terminal domain in the interval 4 to 120 (HNVFLLSLGC…LLQAIGAQYR (117 aa)). 6 residues coordinate [4Fe-4S] cluster: Cys13, Cys49, Cys83, Cys144, Cys148, and Cys151. Residues 130–359 (LTPPHISYLK…MELQETIAKE (230 aa)) form the Radical SAM core domain. The 68-residue stretch at 362-429 (QLFEGKELTV…AYELHGTITA (68 aa)) folds into the TRAM domain.

This sequence belongs to the methylthiotransferase family. RimO subfamily. [4Fe-4S] cluster serves as cofactor.

The protein localises to the cytoplasm. The enzyme catalyses L-aspartate(89)-[ribosomal protein uS12]-hydrogen + (sulfur carrier)-SH + AH2 + 2 S-adenosyl-L-methionine = 3-methylsulfanyl-L-aspartate(89)-[ribosomal protein uS12]-hydrogen + (sulfur carrier)-H + 5'-deoxyadenosine + L-methionine + A + S-adenosyl-L-homocysteine + 2 H(+). Catalyzes the methylthiolation of an aspartic acid residue of ribosomal protein uS12. The protein is Ribosomal protein uS12 methylthiotransferase RimO of Chlorobium phaeobacteroides (strain DSM 266 / SMG 266 / 2430).